Reading from the N-terminus, the 459-residue chain is Elongation factor 1-alpha 1 (459 aa).

The tr-type G domain maps to 5-242 (KTHINIVVIG…DCIIPPQRPT (238 aa)). The segment at 14–21 (GHVDSGKS) is G1. Residues 70 to 74 (GITID) form a G2 region. A G3 region spans residues 91 to 94 (DAPG). The G4 stretch occupies residues 153-156 (NKMD). A G5 region spans residues 194–196 (SGF). 5-glutamyl glycerylphosphorylethanolamine occurs at positions 301 and 374.

The protein belongs to the TRAFAC class translation factor GTPase superfamily. Classic translation factor GTPase family. EF-Tu/EF-1A subfamily.

The protein localises to the cytoplasm. Its function is as follows. This protein promotes the GTP-dependent binding of aminoacyl-tRNA to the A-site of ribosomes during protein biosynthesis. The chain is Elongation factor 1-alpha 1 (eft-1) from Oscheius tipulae.